Here is a 552-residue protein sequence, read N- to C-terminus: Putative transport protein HAPS_0158 (552 aa).

A run of 5 helical transmembrane segments spans residues 4 to 24 (IALTVSLLSLVAVIGLWIGHI), 28 to 48 (GVSLGIGGVLFGGILVSHFMT), 65 to 85 (FGLILFVYTIGIQVGPGFFAS), 95 to 115 (AFAVMIVGISGILVILLHKIF), and 157 to 177 (MGYAIAYPFGIIGILLAMWLI). RCK C-terminal domains are found at residues 193 to 275 (DSAT…ILGE) and 277 to 360 (VNVS…IIGN). 6 helical membrane passes run 370–390 (MLPIFIGVGLGVLLGSIPIYL), 393–413 (FPVALKLGLAGGPLVVALILA), 438–458 (IVLFLAVVGWKAGGNFLNTLL), 463–483 (LAWIGYGAIITFVPLIVTGLV), 492–512 (YLSLCGLLAGSMTDPPALAFA), and 532–552 (LVMFCRIILPQILAILLWVAG).

Belongs to the AAE transporter (TC 2.A.81) family. YidE subfamily.

It is found in the cell membrane. This chain is Putative transport protein HAPS_0158, found in Glaesserella parasuis serovar 5 (strain SH0165) (Haemophilus parasuis).